The chain runs to 31 residues: MSLFIGYIIFLVAFFGLATGLFLGLKAIKLI.

Residues 3 to 23 (LFIGYIIFLVAFFGLATGLFL) form a helical membrane-spanning segment.

This sequence belongs to the PetL family. The 4 large subunits of the cytochrome b6-f complex are cytochrome b6, subunit IV (17 kDa polypeptide, PetD), cytochrome f and the Rieske protein, while the 4 small subunits are PetG, PetL, PetM and PetN. The complex functions as a dimer.

It localises to the plastid. The protein resides in the chloroplast thylakoid membrane. Its function is as follows. Component of the cytochrome b6-f complex, which mediates electron transfer between photosystem II (PSII) and photosystem I (PSI), cyclic electron flow around PSI, and state transitions. PetL is important for photoautotrophic growth as well as for electron transfer efficiency and stability of the cytochrome b6-f complex. This is Cytochrome b6-f complex subunit 6 from Porphyra purpurea (Red seaweed).